The chain runs to 344 residues: MDKKTLSIVGASGYAGGEFLRLALSHPYLEVKQVTSRRFAGEPVHFVHPNLRGRTNLKFIPPEKLEPADILVLALPHGVFAREFDRYSALAPILIDLSADFRLKDPELYRRYYGEHPRPDLLGCFVYAVPELYREALKGADWIAGAGCNATATLLGLYPLLKAGVLKPTPIFVTLLISTSAAGAEASPASHHPERAGSIRVYKPTGHRHTAEVVENLPGRPEVHLTAIATDRVRGILMTAQCFVQDGWSERDVWQAYREAYAGEPFIRLVKQKKGVHRYPDPRFVQGTNYADIGFELEEDTGRLVVMTAIDNLVKGTAGHALQALNVRMGWPETLGLDFPGLHP.

NADP(+)-binding positions include S12–A15, S36–R38, and L75. The active site involves C148. Residues S180, A184, and N312 each coordinate NADP(+).

Belongs to the NAGSA dehydrogenase family. Type 1 subfamily. LysY sub-subfamily. As to quaternary structure, homotetramer. Interacts with LysW. May form a ternary complex with LysW and LysZ.

It localises to the cytoplasm. The catalysed reaction is [amino-group carrier protein]-C-terminal-N-(1-carboxy-5-oxopentan-1-yl)-L-glutamine + phosphate + NADP(+) = [amino-group carrier protein]-C-terminal-N-(1-carboxy-5-phosphooxy-5-oxopentan-1-yl)-L-glutamine + NADPH + H(+). It functions in the pathway amino-acid biosynthesis; L-lysine biosynthesis via AAA pathway; L-lysine from L-alpha-aminoadipate (Thermus route): step 3/5. Functionally, catalyzes the NADPH-dependent reduction of [LysW]-aminoadipate 6-phosphate to yield [LysW]-aminoadipate 6-semialdehyde. The chain is [LysW]-L-2-aminoadipate 6-phosphate reductase from Thermus thermophilus (strain ATCC BAA-163 / DSM 7039 / HB27).